Here is a 122-residue protein sequence, read N- to C-terminus: Large ribosomal subunit protein uL14 (122 aa).

It belongs to the universal ribosomal protein uL14 family. As to quaternary structure, part of the 50S ribosomal subunit. Forms a cluster with proteins L3 and L19. In the 70S ribosome, L14 and L19 interact and together make contacts with the 16S rRNA in bridges B5 and B8.

Functionally, binds to 23S rRNA. Forms part of two intersubunit bridges in the 70S ribosome. In Psychrobacter arcticus (strain DSM 17307 / VKM B-2377 / 273-4), this protein is Large ribosomal subunit protein uL14.